Here is a 423-residue protein sequence, read N- to C-terminus: Gamma-glutamyl phosphate reductase (423 aa).

Belongs to the gamma-glutamyl phosphate reductase family.

The protein resides in the cytoplasm. The catalysed reaction is L-glutamate 5-semialdehyde + phosphate + NADP(+) = L-glutamyl 5-phosphate + NADPH + H(+). It functions in the pathway amino-acid biosynthesis; L-proline biosynthesis; L-glutamate 5-semialdehyde from L-glutamate: step 2/2. Catalyzes the NADPH-dependent reduction of L-glutamate 5-phosphate into L-glutamate 5-semialdehyde and phosphate. The product spontaneously undergoes cyclization to form 1-pyrroline-5-carboxylate. The protein is Gamma-glutamyl phosphate reductase of Burkholderia lata (strain ATCC 17760 / DSM 23089 / LMG 22485 / NCIMB 9086 / R18194 / 383).